Reading from the N-terminus, the 117-residue chain is Ig heavy chain V region MOO (117 aa).

The 116-residue stretch at 1 to 116 (EVKLVESGGD…FGQGTIVTVS (116 aa)) folds into the Ig-like domain.

This Canis lupus familiaris (Dog) protein is Ig heavy chain V region MOO.